The sequence spans 287 residues: ATP synthase gamma chain (287 aa).

This sequence belongs to the ATPase gamma chain family. In terms of assembly, F-type ATPases have 2 components, CF(1) - the catalytic core - and CF(0) - the membrane proton channel. CF(1) has five subunits: alpha(3), beta(3), gamma(1), delta(1), epsilon(1). CF(0) has three main subunits: a, b and c.

The protein resides in the cell inner membrane. Produces ATP from ADP in the presence of a proton gradient across the membrane. The gamma chain is believed to be important in regulating ATPase activity and the flow of protons through the CF(0) complex. This chain is ATP synthase gamma chain, found in Citrobacter koseri (strain ATCC BAA-895 / CDC 4225-83 / SGSC4696).